The sequence spans 171 residues: 3-hydroxydecanoyl-[acyl-carrier-protein] dehydratase (171 aa).

The active site involves His70.

It belongs to the thioester dehydratase family. FabA subfamily. In terms of assembly, homodimer.

Its subcellular location is the cytoplasm. It carries out the reaction a (3R)-hydroxyacyl-[ACP] = a (2E)-enoyl-[ACP] + H2O. The catalysed reaction is (3R)-hydroxydecanoyl-[ACP] = (2E)-decenoyl-[ACP] + H2O. It catalyses the reaction (2E)-decenoyl-[ACP] = (3Z)-decenoyl-[ACP]. The protein operates within lipid metabolism; fatty acid biosynthesis. Functionally, necessary for the introduction of cis unsaturation into fatty acids. Catalyzes the dehydration of (3R)-3-hydroxydecanoyl-ACP to E-(2)-decenoyl-ACP and then its isomerization to Z-(3)-decenoyl-ACP. Can catalyze the dehydratase reaction for beta-hydroxyacyl-ACPs with saturated chain lengths up to 16:0, being most active on intermediate chain length. The protein is 3-hydroxydecanoyl-[acyl-carrier-protein] dehydratase of Xanthomonas euvesicatoria pv. vesicatoria (strain 85-10) (Xanthomonas campestris pv. vesicatoria).